The sequence spans 81 residues: Exodeoxyribonuclease 7 small subunit (81 aa).

Belongs to the XseB family. In terms of assembly, heterooligomer composed of large and small subunits.

It localises to the cytoplasm. It carries out the reaction Exonucleolytic cleavage in either 5'- to 3'- or 3'- to 5'-direction to yield nucleoside 5'-phosphates.. Its function is as follows. Bidirectionally degrades single-stranded DNA into large acid-insoluble oligonucleotides, which are then degraded further into small acid-soluble oligonucleotides. The chain is Exodeoxyribonuclease 7 small subunit from Rhodopseudomonas palustris (strain BisA53).